A 156-amino-acid polypeptide reads, in one-letter code: ATP synthase subunit b (156 aa).

The helical transmembrane segment at leucine 7–phenylalanine 29 threads the bilayer.

This sequence belongs to the ATPase B chain family. As to quaternary structure, F-type ATPases have 2 components, F(1) - the catalytic core - and F(0) - the membrane proton channel. F(1) has five subunits: alpha(3), beta(3), gamma(1), delta(1), epsilon(1). F(0) has three main subunits: a(1), b(2) and c(10-14). The alpha and beta chains form an alternating ring which encloses part of the gamma chain. F(1) is attached to F(0) by a central stalk formed by the gamma and epsilon chains, while a peripheral stalk is formed by the delta and b chains.

The protein localises to the cell inner membrane. In terms of biological role, f(1)F(0) ATP synthase produces ATP from ADP in the presence of a proton or sodium gradient. F-type ATPases consist of two structural domains, F(1) containing the extramembraneous catalytic core and F(0) containing the membrane proton channel, linked together by a central stalk and a peripheral stalk. During catalysis, ATP synthesis in the catalytic domain of F(1) is coupled via a rotary mechanism of the central stalk subunits to proton translocation. Component of the F(0) channel, it forms part of the peripheral stalk, linking F(1) to F(0). This is ATP synthase subunit b from Dichelobacter nodosus (strain VCS1703A).